Reading from the N-terminus, the 161-residue chain is Large ribosomal subunit protein uL15 (161 aa).

The segment at 1-50 is disordered; the sequence is MKLSDIADNAGSRKKRMRIGRGIGSGKGKTGGRGGKGQTARSGVRINGFE. Residues 21–37 show a composition bias toward gly residues; that stretch reads RGIGSGKGKTGGRGGKG.

The protein belongs to the universal ribosomal protein uL15 family. As to quaternary structure, part of the 50S ribosomal subunit.

Its function is as follows. Binds to the 23S rRNA. This is Large ribosomal subunit protein uL15 from Nitrobacter winogradskyi (strain ATCC 25391 / DSM 10237 / CIP 104748 / NCIMB 11846 / Nb-255).